Here is a 457-residue protein sequence, read N- to C-terminus: tRNA-2-methylthio-N(6)-dimethylallyladenosine synthase (457 aa).

An MTTase N-terminal domain is found at 3-120 (KKVYVKTFGC…LPQMIDKRRE (118 aa)). Residues cysteine 12, cysteine 49, cysteine 83, cysteine 157, cysteine 161, and cysteine 164 each coordinate [4Fe-4S] cluster. The 235-residue stretch at 143 to 377 (RVDGPSAFVS…QATIEENVQR (235 aa)) folds into the Radical SAM core domain. One can recognise a TRAM domain in the interval 380 to 447 (DSMVGKIERI…PHSLRGELVL (68 aa)).

The protein belongs to the methylthiotransferase family. MiaB subfamily. Monomer. It depends on [4Fe-4S] cluster as a cofactor.

The protein localises to the cytoplasm. The catalysed reaction is N(6)-dimethylallyladenosine(37) in tRNA + (sulfur carrier)-SH + AH2 + 2 S-adenosyl-L-methionine = 2-methylsulfanyl-N(6)-dimethylallyladenosine(37) in tRNA + (sulfur carrier)-H + 5'-deoxyadenosine + L-methionine + A + S-adenosyl-L-homocysteine + 2 H(+). In terms of biological role, catalyzes the methylthiolation of N6-(dimethylallyl)adenosine (i(6)A), leading to the formation of 2-methylthio-N6-(dimethylallyl)adenosine (ms(2)i(6)A) at position 37 in tRNAs that read codons beginning with uridine. This chain is tRNA-2-methylthio-N(6)-dimethylallyladenosine synthase, found in Paraburkholderia xenovorans (strain LB400).